The chain runs to 317 residues: Cytochrome c biogenesis protein CcsA (317 aa).

8 helical membrane passes run 17–37, 44–64, 71–91, 101–121, 143–163, 223–243, 252–272, and 284–304; these read VVSI…IVGL, GMIV…IYSG, LYES…LPYL, ITSP…LTQI, MILS…LLVI, IISI…VWAN, WDPK…YLHI, and AIVA…INIL.

This sequence belongs to the CcmF/CycK/Ccl1/NrfE/CcsA family. May interact with Ccs1.

It localises to the plastid. The protein resides in the chloroplast thylakoid membrane. Required during biogenesis of c-type cytochromes (cytochrome c6 and cytochrome f) at the step of heme attachment. The protein is Cytochrome c biogenesis protein CcsA of Pelargonium hortorum (Common geranium).